The primary structure comprises 408 residues: Aminoacylase-1 (408 aa).

Residue His76 participates in Zn(2+) binding. Asp78 is an active-site residue. Asp109 contacts Zn(2+). The active-site Proton acceptor is the Glu143. Zn(2+) contacts are provided by Glu144, Glu172, and His379.

This sequence belongs to the peptidase M20A family. As to quaternary structure, homodimer. Requires Zn(2+) as cofactor.

The protein localises to the cytoplasm. The catalysed reaction is an N-acyl-L-amino acid + H2O = an L-alpha-amino acid + a carboxylate. It carries out the reaction an N-acetyl-L-cysteine-S-conjugate + H2O = an S-substituted L-cysteine + acetate. In terms of biological role, involved in the hydrolysis of N-acylated or N-acetylated amino acids (except L-aspartate). In Dictyostelium discoideum (Social amoeba), this protein is Aminoacylase-1 (acy1).